A 266-amino-acid polypeptide reads, in one-letter code: Small ribosomal subunit protein uS3m (266 aa).

Belongs to the universal ribosomal protein uS3 family.

The protein localises to the mitochondrion. The protein is Small ribosomal subunit protein uS3m (MRPS3) of Mycosarcoma maydis (Corn smut fungus).